The following is a 54-amino-acid chain: ATP synthase protein 8 (54 aa).

The helical transmembrane segment at 9–29 (WIINFFIVWTADFTLLIVLSI) threads the bilayer.

It belongs to the ATPase protein 8 family. F-type ATPases have 2 components, CF(1) - the catalytic core - and CF(0) - the membrane proton channel.

It is found in the mitochondrion membrane. Mitochondrial membrane ATP synthase (F(1)F(0) ATP synthase or Complex V) produces ATP from ADP in the presence of a proton gradient across the membrane which is generated by electron transport complexes of the respiratory chain. F-type ATPases consist of two structural domains, F(1) - containing the extramembraneous catalytic core and F(0) - containing the membrane proton channel, linked together by a central stalk and a peripheral stalk. During catalysis, ATP synthesis in the catalytic domain of F(1) is coupled via a rotary mechanism of the central stalk subunits to proton translocation. Part of the complex F(0) domain. Minor subunit located with subunit a in the membrane. The polypeptide is ATP synthase protein 8 (MT-ATP8) (Arbacia lixula (Black urchin)).